Consider the following 420-residue polypeptide: MSLLALGINHKTAPVSLRERVTFSPDTLDRAIESLLRQPSVQAGVVLSTCNRTELYLSVEQRADLRQQIVDWLCSYHQLTPEEVSDSLYWHQDNEAVSHLMRVASGLDSLVLGEPQILGQVKKAFSESQREQALSADLERLFQKTFSVAKRVRTETEIGTSAVSVAFAACTLARQIFESLARLNVLLVGAGETIELVARHLHQHQVQHMMIANRTRERAQSLADEVGAEVIPLADIDARLADADIVISSTASPLPIIGKGMVERALKARRNRPMLLVDIAVPRDIEPEVGDLANAYLYSVDDLHAIIQGNMAQRQEAAVQAEHIVQQECANFMAWLRAQGAVDTIREYRAQAEQRRAEAESEALAALAQGVEAEAVIRRLAHRLTNRLIHAPTKSLQQAAGSGDAQRLQMLRDSLGLDHN.

Substrate contacts are provided by residues T49–R52, S109, E114–Q116, and Q120. C50 functions as the Nucleophile in the catalytic mechanism. G189–I194 contacts NADP(+).

It belongs to the glutamyl-tRNA reductase family. Homodimer.

The catalysed reaction is (S)-4-amino-5-oxopentanoate + tRNA(Glu) + NADP(+) = L-glutamyl-tRNA(Glu) + NADPH + H(+). Its pathway is porphyrin-containing compound metabolism; protoporphyrin-IX biosynthesis; 5-aminolevulinate from L-glutamyl-tRNA(Glu): step 1/2. Its function is as follows. Catalyzes the NADPH-dependent reduction of glutamyl-tRNA(Glu) to glutamate 1-semialdehyde (GSA). The protein is Glutamyl-tRNA reductase of Edwardsiella ictaluri (strain 93-146).